The chain runs to 444 residues: Phosphoribosylamine--glycine ligase (444 aa).

The ATP-grasp domain occupies 109 to 324; sequence RNLFKKYEID…FLDVCFAIAE (216 aa). 140–202 lines the ATP pocket; that stretch reads MTSLGKDVVV…EEKLVGVEFT (63 aa). Positions 282, 294, and 296 each coordinate Mg(2+). 3 residues coordinate Mn(2+): Q282, E294, and N296.

The protein belongs to the GARS family. Mg(2+) is required as a cofactor. Mn(2+) serves as cofactor.

The catalysed reaction is 5-phospho-beta-D-ribosylamine + glycine + ATP = N(1)-(5-phospho-beta-D-ribosyl)glycinamide + ADP + phosphate + H(+). Its pathway is purine metabolism; IMP biosynthesis via de novo pathway; N(1)-(5-phospho-D-ribosyl)glycinamide from 5-phospho-alpha-D-ribose 1-diphosphate: step 2/2. This Methanococcus maripaludis (strain DSM 14266 / JCM 13030 / NBRC 101832 / S2 / LL) protein is Phosphoribosylamine--glycine ligase.